A 192-amino-acid polypeptide reads, in one-letter code: N-terminal acetyltransferase A complex catalytic subunit NAA10 (192 aa).

In terms of domain architecture, N-acetyltransferase spans 2-152 (VCIRRATVDD…DAYDMRKNLK (151 aa)).

It belongs to the acetyltransferase family. ARD1 subfamily. Part of the NatA complex. Interacts with NAA15. Expressed in leaves, roots, shoots and flowers.

The enzyme catalyses N-terminal glycyl-[protein] + acetyl-CoA = N-terminal N(alpha)-acetylglycyl-[protein] + CoA + H(+). It carries out the reaction N-terminal L-alanyl-[protein] + acetyl-CoA = N-terminal N(alpha)-acetyl-L-alanyl-[protein] + CoA + H(+). The catalysed reaction is N-terminal L-seryl-[protein] + acetyl-CoA = N-terminal N(alpha)-acetyl-L-seryl-[protein] + CoA + H(+). It catalyses the reaction N-terminal L-valyl-[protein] + acetyl-CoA = N-terminal N(alpha)-acetyl-L-valyl-[protein] + CoA + H(+). The enzyme catalyses N-terminal L-cysteinyl-[protein] + acetyl-CoA = N-terminal N(alpha)-acetyl-L-cysteinyl-[protein] + CoA + H(+). It carries out the reaction N-terminal L-threonyl-[protein] + acetyl-CoA = N-terminal N(alpha)-acetyl-L-threonyl-[protein] + CoA + H(+). Catalytic subunit of the NatA N-alpha-acetyltransferase complex. Required for male gametocyte development, embryogenesis, suspensor development and the formation of the quiescent center (QC) in the root meristem. Involved in plant immunity through the regulation of SNC1 and RPM1 stability. This chain is N-terminal acetyltransferase A complex catalytic subunit NAA10, found in Arabidopsis thaliana (Mouse-ear cress).